Reading from the N-terminus, the 863-residue chain is Valine--tRNA ligase (863 aa).

The short motif at 43–53 is the 'HIGH' region element; sequence PYPTGSFHIGH. A 'KMSKS' region motif is present at residues 517–521; sequence KMSKS. ATP is bound at residue Lys520.

Belongs to the class-I aminoacyl-tRNA synthetase family. ValS type 2 subfamily.

It is found in the cytoplasm. It carries out the reaction tRNA(Val) + L-valine + ATP = L-valyl-tRNA(Val) + AMP + diphosphate. In terms of biological role, catalyzes the attachment of valine to tRNA(Val). As ValRS can inadvertently accommodate and process structurally similar amino acids such as threonine, to avoid such errors, it has a 'posttransfer' editing activity that hydrolyzes mischarged Thr-tRNA(Val) in a tRNA-dependent manner. The sequence is that of Valine--tRNA ligase from Archaeoglobus fulgidus (strain ATCC 49558 / DSM 4304 / JCM 9628 / NBRC 100126 / VC-16).